A 448-amino-acid chain; its full sequence is Tubulin beta chain (448 aa).

8 residues coordinate GTP: Q11, E69, S138, G142, T143, G144, N204, and N226. Mg(2+) is bound at residue E69. Residues 425-448 (YQDASISEGEEEYLEEEEPLEHEE) are disordered. The span at 432-448 (EGEEEYLEEEEPLEHEE) shows a compositional bias: acidic residues.

Belongs to the tubulin family. In terms of assembly, dimer of alpha and beta chains. A typical microtubule is a hollow water-filled tube with an outer diameter of 25 nm and an inner diameter of 15 nM. Alpha-beta heterodimers associate head-to-tail to form protofilaments running lengthwise along the microtubule wall with the beta-tubulin subunit facing the microtubule plus end conferring a structural polarity. Microtubules usually have 13 protofilaments but different protofilament numbers can be found in some organisms and specialized cells. Mg(2+) serves as cofactor.

Its subcellular location is the cytoplasm. The protein localises to the cytoskeleton. Functionally, tubulin is the major constituent of microtubules, a cylinder consisting of laterally associated linear protofilaments composed of alpha- and beta-tubulin heterodimers. Microtubules grow by the addition of GTP-tubulin dimers to the microtubule end, where a stabilizing cap forms. Below the cap, tubulin dimers are in GDP-bound state, owing to GTPase activity of alpha-tubulin. This chain is Tubulin beta chain (benA56), found in Aspergillus oryzae (strain ATCC 42149 / RIB 40) (Yellow koji mold).